The chain runs to 189 residues: UPF0340 protein EF_1967 (189 aa).

The protein belongs to the UPF0340 family.

In Enterococcus faecalis (strain ATCC 700802 / V583), this protein is UPF0340 protein EF_1967.